The sequence spans 251 residues: MSLVNEKLKLENIRSALIRQEDTIIFNFLERAQFPRNEKVYKSGKEGCLNLENYDGSFLNYLLHEEEKVYALVRRYASPEEYPFTDNLPEPILPKFSGKFPLHPNNVNVNSEILEYYINEIVPKISSPGDDFDNYGSTVVCDIRCLQSLSRRIHYGKFVAEAKYLANPEKYKKLILARDIKGIENEIVDAAQEERVLKRLHYKALNYGRDAADPTKPSDRINADCVASIYKDYVIPMTKKVEVDYLLARLL.

Positions 1-251 (MSLVNEKLKL…EVDYLLARLL (251 aa)) constitute a Chorismate mutase domain. 5 residues coordinate L-tyrosine: Arg74, Arg75, Asn134, Gly136, and Ser137. Residues Asn134, Gly136, and Ser137 each coordinate L-tryptophan.

As to quaternary structure, homodimer.

The protein resides in the cytoplasm. The enzyme catalyses chorismate = prephenate. It participates in metabolic intermediate biosynthesis; prephenate biosynthesis; prephenate from chorismate: step 1/1. With respect to regulation, each dimer has two allosteric binding sites that can bind the regulatory effectors tryptophan or tyrosine. Can bind either one tryptophan or one tyrosine, two tryptophan or two tyrosine or one tryptophan and one tyrosine, which differentially affect the catalytic activity. Activated by tryptophan and subject to feedback inhibition by tyrosine. In the presence of both tryptophan and tyrosine, the enzyme is in the activated state. Functionally, catalyzes the Claisen rearrangement of chorismate to prephenate. Acts at the first branch point in the aromatic amino acid pathway where it steers biosynthesis towards phenylalanine and tyrosine, and away from tryptophan. The chain is Chorismate mutase from Schizosaccharomyces pombe (strain 972 / ATCC 24843) (Fission yeast).